The chain runs to 825 residues: Zygotic DNA replication licensing factor mcm6-B (825 aa).

The segment at 159–186 adopts a C4-type zinc-finger fold; sequence CLDCQTLVRDVEQQFKYTQPSICRNPVC. The 208-residue stretch at 347 to 554 folds into the MCM domain; the sequence is LYHNLCTSLF…TDYAIARRIV (208 aa). Position 397 to 404 (397 to 404) interacts with ATP; the sequence is GDPSTAKS. The short motif at 529-532 is the Arginine finger element; it reads SRFD. The segment covering 668 to 679 has biased composition (acidic residues); the sequence is DQEDEHEVEEPQ. The interval 668-690 is disordered; it reads DQEDEHEVEEPQEGINGDADVPN.

This sequence belongs to the MCM family. As to quaternary structure, component of the mcm2-7 complex (RLF-M). The complex forms a toroidal hexameric ring with the proposed subunit order mcm2-mcm6-mcm4-mcm7-mcm3-mcm5 (By simililarity). Begins to associate with zmcm3, mcm4 and mcm7 into mcm complexes at the neurula stage.

The protein resides in the nucleus. It carries out the reaction ATP + H2O = ADP + phosphate + H(+). Functionally, acts as a component of the mcm2-7 complex (mcm complex) which is the putative replicative helicase essential for 'once per cell cycle' DNA replication initiation and elongation in eukaryotic cells. The active ATPase sites in the mcm2-7 ring are formed through the interaction surfaces of two neighboring subunits such that a critical structure of a conserved arginine finger motif is provided in trans relative to the ATP-binding site of the Walker A box of the adjacent subunit. The six ATPase active sites, however, are likely to contribute differentially to the complex helicase activity. The existence of maternal and zygotic forms of mcm3 and mcm6 suggests that specific forms of mcm2-7 complexes may be used during different stages of development. May replace mmcm6 in the mcm2-7 complex. This is Zygotic DNA replication licensing factor mcm6-B (zmcm6-b) from Xenopus laevis (African clawed frog).